Consider the following 91-residue polypeptide: MVKLRLKRCGRKQRAVYRIVAIDARSRREGRDLRKVGFYDPIKNQTYSNVPAILYFLEKGAQPTGTVHDISKKAEVFTELRLNQTKFKFNQ.

The protein belongs to the bacterial ribosomal protein bS16 family.

The protein resides in the plastid. Its subcellular location is the chloroplast. The chain is Small ribosomal subunit protein bS16c from Vitis vinifera (Grape).